Here is a 404-residue protein sequence, read N- to C-terminus: Keratin, type I cuticular Ha3-I (404 aa).

The interval 1 to 56 (MSYSCGLPSLSCRTSCSSRPCVPPSCHGCTLPGACNIPANVSNCNWFCEGSFNGSE) is head. One can recognise an IF rod domain in the interval 56–367 (EKETMQFLND…SLLESEDCKL (312 aa)). The segment at 57–91 (KETMQFLNDRLASYLEKVRQLERDNAELENLIRER) is coil 1A. The tract at residues 92–102 (SQQQEPLVCAS) is linker 1. Residues 103–203 (YQSYFKTIEE…HEQEVNTLRC (101 aa)) form a coil 1B region. Residues 204–219 (QLGDRLNVEVDAAPTV) are linker 12. The segment at 220 to 363 (DLNQVLNETR…NTYRSLLESE (144 aa)) is coil 2. Positions 364-404 (DCKLPSNPCATTNACDKSTGPCISNPCGLRARCGPCNTFGY) are tail.

This sequence belongs to the intermediate filament family. Expressed in the hair follicles.

The protein is Keratin, type I cuticular Ha3-I (KRT33A) of Homo sapiens (Human).